Here is a 141-residue protein sequence, read N- to C-terminus: Large-conductance mechanosensitive channel (141 aa).

The next 3 helical transmembrane spans lie at 14 to 34 (VVDLAVGVIIGAAFGAIVNSL), 38 to 58 (VIMPIIGAVTGGLDFSNYYIP), and 82 to 102 (GQFLTLAVNFTIIAFVLFMVI).

This sequence belongs to the MscL family. In terms of assembly, homopentamer.

The protein localises to the cell inner membrane. Functionally, channel that opens in response to stretch forces in the membrane lipid bilayer. May participate in the regulation of osmotic pressure changes within the cell. This Methylorubrum extorquens (strain CM4 / NCIMB 13688) (Methylobacterium extorquens) protein is Large-conductance mechanosensitive channel.